Reading from the N-terminus, the 552-residue chain is Iduronate 2-sulfatase (552 aa).

An N-terminal signal peptide occupies residues 1-29 (MSPPPPPPIWRQLSFSLLLGSFCIALESA). The propeptide occupies 30–35 (AQGNSA). 3 residues coordinate Ca(2+): Asp47, Asp48, and Cys86. Residue Cys86 is the Nucleophile of the active site. Residue Cys86 is modified to 3-oxoalanine (Cys). An N-linked (GlcNAc...) asparagine glycan is attached at Asn117. His140 is a catalytic residue. N-linked (GlcNAc...) asparagine glycosylation is present at Asn146. A disulfide bridge links Cys173 with Cys186. N-linked (GlcNAc...) asparagine glycans are attached at residues Asn248 and Asn282. Residues Asp336 and His337 each coordinate Ca(2+). Cys424 and Cys434 are disulfide-bonded. Asn515 and Asn539 each carry an N-linked (GlcNAc...) asparagine glycan.

It belongs to the sulfatase family. As to quaternary structure, monomer. The 58-kDa mature form is composed of two chains resulting from proteolitic processing, the 42-kDa chain and the 14-kDa chain that remain stably associated and form the 58-kDa intermediate form which is enzymatically active. The cofactor is Ca(2+). Post-translationally, synthesized as a 75-kDa precursor form in the endoplasmic reticulum (ER), and then processed by proteolytic cleavage through various intermediates to yield a 55-kDa mature form, with the release of an 18 kDa polypeptide. The conversion to 3-oxoalanine (also known as C-formylglycine, FGly), of a serine or cysteine residue in prokaryotes and of a cysteine residue in eukaryotes, is critical for catalytic activity. Found to be expressed in alpha and beta pancreatic cells.

The protein localises to the lysosome. It catalyses the reaction Hydrolysis of the 2-sulfate groups of the L-iduronate 2-sulfate units of dermatan sulfate, heparan sulfate and heparin.. In terms of biological role, lysosomal enzyme involved in the degradation pathway of dermatan sulfate and heparan sulfate. This is Iduronate 2-sulfatase (Ids) from Mus musculus (Mouse).